The chain runs to 282 residues: MKLLRYGPPGQEKPGILDADGRIRDLSAHVPDLAGDVLSDAGLARLRALDPATLPLVSGEPRIGACVGRVGKFIGIGLNYADHAAEAGMPVPKEPVVFGKWTSSICGPNDGIDIPKGSVKTDWEVELGVVIGAPCKDVDEARALDYVAGYCVVNDVSEREWQIERGGQWDKGKGFDTFGPIGPWLVTRDEVPDPQSLDLWLEVDGHRYQNGNTRTMVFTVAQLIAYLSSCMTLQPGDVITTGTPPGVGMGIKPAPVYLKAGQMVRLGIEGLGEQLQLTRAAR.

Residues Glu124, Glu126, and Asp155 each coordinate Mg(2+).

This sequence belongs to the FAH family. Requires Mg(2+) as cofactor.

This is Putative hydrolase Bmul_3283/BMULJ_05242 from Burkholderia multivorans (strain ATCC 17616 / 249).